The chain runs to 415 residues: Multidrug resistance protein MdtA (415 aa).

An N-terminal signal peptide occupies residues 1–21 (MKGSYKSRWVIVIVVVIAAIA). Disordered stretches follow at residues 32–59 (SRSA…SGPL) and 392–415 (EAQS…GARS). Basic and acidic residues predominate over residues 399-415 (SEEKATSREYAKKGARS).

It belongs to the membrane fusion protein (MFP) (TC 8.A.1) family. Part of a tripartite efflux system composed of MdtA, MdtB and MdtC.

It is found in the cell inner membrane. In terms of biological role, the MdtABC tripartite complex confers resistance against novobiocin and deoxycholate. This is Multidrug resistance protein MdtA from Escherichia coli O17:K52:H18 (strain UMN026 / ExPEC).